The chain runs to 478 residues: Serine/threonine-protein phosphatase T (478 aa).

3 TPR repeats span residues 9-42 (ATAL…YDRE), 43-76 (PSFF…DPAY), and 78-110 (KAYW…EPNN). Positions 151–463 (AVDDSYDGVR…QVFEAVPHPD (313 aa)) are catalytic. Mn(2+) is bound by residues Asp-221, His-223, Asp-250, and Asn-282. The active-site Proton donor/acceptor is the His-283. Residues His-331 and His-408 each coordinate Mn(2+).

Belongs to the PPP phosphatase family. PP-5 (PP-T) subfamily. It depends on Mg(2+) as a cofactor. Mn(2+) is required as a cofactor.

Its subcellular location is the nucleus. It catalyses the reaction O-phospho-L-seryl-[protein] + H2O = L-seryl-[protein] + phosphate. The enzyme catalyses O-phospho-L-threonyl-[protein] + H2O = L-threonyl-[protein] + phosphate. Its function is as follows. Protein phosphatase that specifically binds to and dephosphorylates the molecular chaperone Hsp90. Dephosphorylation positively regulates the Hsp90 chaperone machinery. This chain is Serine/threonine-protein phosphatase T, found in Aspergillus oryzae (strain ATCC 42149 / RIB 40) (Yellow koji mold).